Reading from the N-terminus, the 282-residue chain is Large ribosomal subunit protein uL2 (282 aa).

The tract at residues Ala230–Lys282 is disordered. Over residues Arg265–Lys282 the composition is skewed to basic residues.

Belongs to the universal ribosomal protein uL2 family. Part of the 50S ribosomal subunit. Forms a bridge to the 30S subunit in the 70S ribosome.

Its function is as follows. One of the primary rRNA binding proteins. Required for association of the 30S and 50S subunits to form the 70S ribosome, for tRNA binding and peptide bond formation. It has been suggested to have peptidyltransferase activity; this is somewhat controversial. Makes several contacts with the 16S rRNA in the 70S ribosome. This Desulfovibrio desulfuricans (strain ATCC 27774 / DSM 6949 / MB) protein is Large ribosomal subunit protein uL2.